We begin with the raw amino-acid sequence, 464 residues long: Soluble pyridine nucleotide transhydrogenase (464 aa).

Residue 35-44 (EASSQVGGSC) coordinates FAD.

The protein belongs to the class-I pyridine nucleotide-disulfide oxidoreductase family. FAD is required as a cofactor.

The protein localises to the cytoplasm. It carries out the reaction NAD(+) + NADPH = NADH + NADP(+). Conversion of NADPH, generated by peripheral catabolic pathways, to NADH, which can enter the respiratory chain for energy generation. The sequence is that of Soluble pyridine nucleotide transhydrogenase from Marinomonas sp. (strain MWYL1).